The following is a 224-amino-acid chain: uncharacterized protein (224 aa).

Residues 1–23 (MKKLLAAGIIGLLTVSIASPSFA) form the signal peptide. The VWFA domain occupies 31 to 224 (NVAVLFDGSG…WEKEAQKFTE (194 aa)).

To B.subtilis YwmC.

This is an uncharacterized protein from Bacillus subtilis (strain 168).